The chain runs to 23 residues: Laccase-1 (23 aa).

This sequence belongs to the multicopper oxidase family. Cu cation serves as cofactor.

The protein localises to the secreted. The enzyme catalyses 4 hydroquinone + O2 = 4 benzosemiquinone + 2 H2O. Strongly inhibited by sodium azide, sodium cyanide, Li(+), Sn(+), Hg(2+), and the disulfide-reducing agents beta-mercaptoethanol, dithiothreitol and thioglycolic acid. Moderately inhibited by Mn(2+) and Fe(2+), inhibition by these metal ions is stronger at 0.1 mM than at 1 mM. Moderately inhibited by Cu(2+). Lignin degradation and detoxification of lignin-derived products. Demethylates eucalyptus hard wood lignin. Has high activity against the non-phenolic heterocyclic compound ABTS, and lower activity against the phenolic substrates syringic acid, caffeic acid, syringaldazine, vanillic acid, catechol and levodihydroxyphenylalanine. The polypeptide is Laccase-1 (Galerina sp).